The following is a 319-amino-acid chain: NADH-quinone oxidoreductase subunit H 1 (319 aa).

Transmembrane regions (helical) follow at residues 8–28, 74–94, 107–127, 147–167, 179–199, 230–250, 258–278, and 297–317; these read LFNI…LIWI, LVFI…FAVI, IGLL…VLGG, LSYE…AGTF, MWFC…GIAE, FFVG…TLFF, LPPL…FILL, and LMLP…LALD.

This sequence belongs to the complex I subunit 1 family. In terms of assembly, NDH-1 is composed of 14 different subunits. Subunits NuoA, H, J, K, L, M, N constitute the membrane sector of the complex.

The protein resides in the cell inner membrane. It carries out the reaction a quinone + NADH + 5 H(+)(in) = a quinol + NAD(+) + 4 H(+)(out). Its function is as follows. NDH-1 shuttles electrons from NADH, via FMN and iron-sulfur (Fe-S) centers, to quinones in the respiratory chain. The immediate electron acceptor for the enzyme in this species is believed to be ubiquinone. Couples the redox reaction to proton translocation (for every two electrons transferred, four hydrogen ions are translocated across the cytoplasmic membrane), and thus conserves the redox energy in a proton gradient. This subunit may bind ubiquinone. The protein is NADH-quinone oxidoreductase subunit H 1 of Nitrosococcus oceani (strain ATCC 19707 / BCRC 17464 / JCM 30415 / NCIMB 11848 / C-107).